A 136-amino-acid chain; its full sequence is Replication enhancer (136 aa).

The protein belongs to the geminiviridae replication enhancer protein family. In terms of assembly, homooligomer. Interacts with the replication-associated protein (REP). Interacts with host proliferating cell nuclear antigen (PCNA). Interacts with host retinoblastoma-related protein 1 (RBR1), and may thereby deregulate the host cell cycle. Oligomerization and interaction with PCNA are necessary for optimal replication enhancement.

In terms of biological role, increases viral DNA accumulation. Enhances infectivity and symptom expression. In Beet curly top virus (strain California/Logan) (BCTV), this protein is Replication enhancer.